We begin with the raw amino-acid sequence, 139 residues long: D-ribose pyranase (139 aa).

The Proton donor role is filled by His20. Residues Asp28, His106, and 128 to 130 contribute to the substrate site; that span reads YAN.

The protein belongs to the RbsD / FucU family. RbsD subfamily. In terms of assembly, homodecamer.

The protein localises to the cytoplasm. The catalysed reaction is beta-D-ribopyranose = beta-D-ribofuranose. It participates in carbohydrate metabolism; D-ribose degradation; D-ribose 5-phosphate from beta-D-ribopyranose: step 1/2. Functionally, catalyzes the interconversion of beta-pyran and beta-furan forms of D-ribose. The sequence is that of D-ribose pyranase from Vibrio campbellii (strain ATCC BAA-1116).